Here is a 299-residue protein sequence, read N- to C-terminus: Peroxisomal biogenesis factor 19 (299 aa).

The interval 1-63 is disordered; that stretch reads MAAAEEGCSV…SPGDTAKDAL (63 aa). The residue at position 2 (Ala2) is an N-acetylalanine. The tract at residues 2-56 is docking to the peroxisome membrane and binding to PEX3; that stretch reads AAAEEGCSVGAEADRELEELLESALDDFDKAKPSPAPPSTTTAPDASGPQKRSPG. Positions 2 to 91 are necessary for PEX19 function on peroxisome biogenesis; it reads AAAEEGCSVG…QATAEFEKAM (90 aa). Residues 16–27 show a composition bias toward acidic residues; that stretch reads RELEELLESALD. A phosphoserine mark is found at Ser35, Ser54, and Ser66. At Thr236 the chain carries Phosphothreonine. The residue at position 296 (Cys296) is a Cysteine methyl ester. Cys296 carries the S-farnesyl cysteine lipid modification. Positions 297 to 299 are cleaved as a propeptide — removed in mature form; that stretch reads LIM.

It belongs to the peroxin-19 family. Interacts with a broad range of peroxisomal membrane proteins, including PEX3, PEX10, PEX11A, PEX11B, PEX12, PEX13, PEX14 and PEX16, PXMP2/PMP22, PXMP4/PMP24, SLC25A17/PMP34, ABCD1/ALDP, ABCD2/ALDRP, and ABCD3/PMP70. Also interacts with the tumor suppressor CDKN2A/p19ARF. As to quaternary structure, (Microbial infection) Interacts with human cytomegalovirus protein UL37 isoform vMIA; this interaction inhibits the peroxisomal-dependent antiviral signaling. Ubiquitously expressed. Isoform 1 is strongly predominant in all tissues except in utero where isoform 2 is the main form.

The protein resides in the cytoplasm. Its subcellular location is the peroxisome membrane. Necessary for early peroxisomal biogenesis. Acts both as a cytosolic chaperone and as an import receptor for peroxisomal membrane proteins (PMPs). Binds and stabilizes newly synthesized PMPs in the cytoplasm by interacting with their hydrophobic membrane-spanning domains, and targets them to the peroxisome membrane by binding to the integral membrane protein PEX3. Excludes CDKN2A from the nucleus and prevents its interaction with MDM2, which results in active degradation of TP53. This Homo sapiens (Human) protein is Peroxisomal biogenesis factor 19.